Here is a 284-residue protein sequence, read N- to C-terminus: Ribose-5-phosphate isomerase (284 aa).

This sequence belongs to the ribose 5-phosphate isomerase family.

Its subcellular location is the cytoplasm. It catalyses the reaction aldehydo-D-ribose 5-phosphate = D-ribulose 5-phosphate. It participates in carbohydrate degradation; pentose phosphate pathway; D-ribose 5-phosphate from D-ribulose 5-phosphate (non-oxidative stage): step 1/1. This is Ribose-5-phosphate isomerase (RKI1) from Lodderomyces elongisporus (strain ATCC 11503 / CBS 2605 / JCM 1781 / NBRC 1676 / NRRL YB-4239) (Yeast).